A 159-amino-acid chain; its full sequence is 2-C-methyl-D-erythritol 2,4-cyclodiphosphate synthase (159 aa).

Residues Asp-10 and His-12 each coordinate a divalent metal cation. Residues Asp-10–His-12 and His-36–Ser-37 contribute to the 4-CDP-2-C-methyl-D-erythritol 2-phosphate site. His-44 is an a divalent metal cation binding site. Residues Asp-58 to Gly-60, Phe-63 to Asp-67, Ala-102 to Ala-108, Thr-134 to Glu-137, Phe-141, and Arg-144 each bind 4-CDP-2-C-methyl-D-erythritol 2-phosphate.

The protein belongs to the IspF family. In terms of assembly, homotrimer. Requires a divalent metal cation as cofactor.

The catalysed reaction is 4-CDP-2-C-methyl-D-erythritol 2-phosphate = 2-C-methyl-D-erythritol 2,4-cyclic diphosphate + CMP. Its pathway is isoprenoid biosynthesis; isopentenyl diphosphate biosynthesis via DXP pathway; isopentenyl diphosphate from 1-deoxy-D-xylulose 5-phosphate: step 4/6. In terms of biological role, involved in the biosynthesis of isopentenyl diphosphate (IPP) and dimethylallyl diphosphate (DMAPP), two major building blocks of isoprenoid compounds. Catalyzes the conversion of 4-diphosphocytidyl-2-C-methyl-D-erythritol 2-phosphate (CDP-ME2P) to 2-C-methyl-D-erythritol 2,4-cyclodiphosphate (ME-CPP) with a corresponding release of cytidine 5-monophosphate (CMP). This Shewanella halifaxensis (strain HAW-EB4) protein is 2-C-methyl-D-erythritol 2,4-cyclodiphosphate synthase.